The following is a 41-amino-acid chain: Photosystem I reaction center subunit IX (41 aa).

The helical transmembrane segment at 7 to 29 threads the bilayer; the sequence is YLSTAPVLLTVWLSITASGIMII.

Belongs to the PsaJ family.

It localises to the plastid. The protein resides in the chloroplast thylakoid membrane. In terms of biological role, may help in the organization of the PsaE and PsaF subunits. The protein is Photosystem I reaction center subunit IX of Heterosigma akashiwo (strain NIES-293 / 8280G21-1).